The sequence spans 249 residues: tRNA(Phe) (4-demethylwyosine(37)-C(7)) aminocarboxypropyltransferase (249 aa).

Residues S80, R87, E127, and 154 to 155 (DN) each bind S-adenosyl-L-methionine.

The protein belongs to the class I-like SAM-binding methyltransferase superfamily. TRM5/TYW2 family.

The protein resides in the cytoplasm. It catalyses the reaction 4-demethylwyosine(37) in tRNA(Phe) + S-adenosyl-L-methionine = 4-demethyl-7-[(3S)-3-amino-3-carboxypropyl]wyosine(37) in tRNA(Phe) + S-methyl-5'-thioadenosine + H(+). In terms of biological role, S-adenosyl-L-methionine-dependent transferase that acts as a component of the wyosine derivatives biosynthesis pathway. Catalyzes the transfer of the alpha-amino-alpha-carboxypropyl (acp) group from S-adenosyl-L-methionine to 4-demethylwyosine (imG-14), forming 7-aminocarboxypropyl-demethylwyosine (wybutosine-86) at position 37 of tRNA(Phe). The protein is tRNA(Phe) (4-demethylwyosine(37)-C(7)) aminocarboxypropyltransferase of Methanocaldococcus jannaschii (strain ATCC 43067 / DSM 2661 / JAL-1 / JCM 10045 / NBRC 100440) (Methanococcus jannaschii).